We begin with the raw amino-acid sequence, 237 residues long: Ribonuclease PH (237 aa).

Phosphate is bound by residues Arg-86 and 124–126; that span reads GTR.

Belongs to the RNase PH family. As to quaternary structure, homohexameric ring arranged as a trimer of dimers.

The enzyme catalyses tRNA(n+1) + phosphate = tRNA(n) + a ribonucleoside 5'-diphosphate. Phosphorolytic 3'-5' exoribonuclease that plays an important role in tRNA 3'-end maturation. Removes nucleotide residues following the 3'-CCA terminus of tRNAs; can also add nucleotides to the ends of RNA molecules by using nucleoside diphosphates as substrates, but this may not be physiologically important. Probably plays a role in initiation of 16S rRNA degradation (leading to ribosome degradation) during starvation. This Shewanella frigidimarina (strain NCIMB 400) protein is Ribonuclease PH.